The sequence spans 217 residues: MGQKVCAHGFRVGPTLIKGWDSILYAEKHYKTLFIQDLKIRDLINKGFNQAQISRVLIERPSNKSIIININAKKPNIIIGRNGSEIDKLKKAIEKMTSLKEVYINIHEVRKFNIDAAIVAQTIALQLEKRVSFRKAMKTAIQASFKQGGQGIRVSCSGRLGGAEIARTEWYIEGRMPLHTLRADIDYSTAEAITTYGVIGVKVWIYKGEYTENKRYN.

Residues 40–110 (IRDLINKGFN…EVYINIHEVR (71 aa)) enclose the KH type-2 domain.

This sequence belongs to the universal ribosomal protein uS3 family. As to quaternary structure, part of the 30S ribosomal subunit. Forms a tight complex with proteins S10 and S14.

Its function is as follows. Binds the lower part of the 30S subunit head. Binds mRNA in the 70S ribosome, positioning it for translation. The polypeptide is Small ribosomal subunit protein uS3 (Rickettsia africae (strain ESF-5)).